A 408-amino-acid chain; its full sequence is Putative polysaccharide ligase RBE_0399 (408 aa).

10 helical membrane-spanning segments follow: residues Phe-5–Val-25, Met-72–Ile-92, Pro-94–Val-114, Leu-130–Phe-150, Met-163–Ile-183, Leu-192–Leu-212, Ile-230–Ala-250, Ile-325–Tyr-345, Phe-359–Ser-377, and Val-380–Val-400.

Belongs to the O-antigen ligase family.

Its subcellular location is the membrane. This chain is Putative polysaccharide ligase RBE_0399 (rfaL), found in Rickettsia bellii (strain RML369-C).